Consider the following 155-residue polypeptide: Regulatory protein RecX (155 aa).

It belongs to the RecX family.

It localises to the cytoplasm. Modulates RecA activity. In Pseudomonas entomophila (strain L48), this protein is Regulatory protein RecX.